The chain runs to 304 residues: Aspartate carbamoyltransferase catalytic subunit (304 aa).

Arg56 and Thr57 together coordinate carbamoyl phosphate. Lys85 lines the L-aspartate pocket. Carbamoyl phosphate-binding residues include Arg106, His134, and Gln137. The L-aspartate site is built by Arg167 and Arg226. Positions 265 and 266 each coordinate carbamoyl phosphate.

Belongs to the aspartate/ornithine carbamoyltransferase superfamily. ATCase family. Heterooligomer of catalytic and regulatory chains.

It carries out the reaction carbamoyl phosphate + L-aspartate = N-carbamoyl-L-aspartate + phosphate + H(+). The protein operates within pyrimidine metabolism; UMP biosynthesis via de novo pathway; (S)-dihydroorotate from bicarbonate: step 2/3. Catalyzes the condensation of carbamoyl phosphate and aspartate to form carbamoyl aspartate and inorganic phosphate, the committed step in the de novo pyrimidine nucleotide biosynthesis pathway. In Picrophilus torridus (strain ATCC 700027 / DSM 9790 / JCM 10055 / NBRC 100828 / KAW 2/3), this protein is Aspartate carbamoyltransferase catalytic subunit.